The primary structure comprises 364 residues: Peptide chain release factor 2 (364 aa).

At Q251 the chain carries N5-methylglutamine.

Belongs to the prokaryotic/mitochondrial release factor family. In terms of processing, methylated by PrmC. Methylation increases the termination efficiency of RF2.

Its subcellular location is the cytoplasm. Its function is as follows. Peptide chain release factor 2 directs the termination of translation in response to the peptide chain termination codons UGA and UAA. The protein is Peptide chain release factor 2 of Sulfurovum sp. (strain NBC37-1).